The following is a 379-amino-acid chain: uncharacterized protein (379 aa).

A helical membrane pass occupies residues 9–26 (YFQLITTIFLISSITIAA).

This sequence to A.liquefaciens L-sorbosone dehydrogenase.

It is found in the membrane. This is an uncharacterized protein from Borreliella burgdorferi (strain ATCC 35210 / DSM 4680 / CIP 102532 / B31) (Borrelia burgdorferi).